A 724-amino-acid polypeptide reads, in one-letter code: Degenerin mec-10 (724 aa).

At 1–125 (MNRGPPNPRM…GQAPNSLYRA (125 aa)) the chain is on the cytoplasmic side. A helical membrane pass occupies residues 126–146 (VWVFLLLICAIQFINQAVAVI). Over 147 to 684 (QKYQKMDKIT…FGGHLGLWSG (538 aa)) the chain is Extracellular. Residues asparagine 294, asparagine 370, asparagine 463, asparagine 605, and asparagine 624 are each glycosylated (N-linked (GlcNAc...) asparagine). Residues 685–705 (VSVMTCCEFVCLVLELLYMAV) form a helical membrane-spanning segment. The Cytoplasmic portion of the chain corresponds to 706–724 (THHITQERIRRRENAANEF).

The protein belongs to the amiloride-sensitive sodium channel (TC 1.A.6) family. In terms of assembly, the channel is probably composed of at least the mec-2, mec-4, mec-6 and mec-10 subunits.

The protein localises to the cell membrane. In terms of biological role, amiloride-sensitive sodium channel subunit required for mechanosensory transduction (touch sensitivity). Negatively regulates the turning step of male mating behavior. The protein is Degenerin mec-10 of Caenorhabditis briggsae.